The chain runs to 670 residues: Transketolase, plasmid (670 aa).

Histidine 32 serves as a coordination point for substrate. Thiamine diphosphate contacts are provided by residues histidine 72 and 120-122; that span reads GPL. Aspartate 161 lines the Mg(2+) pocket. The thiamine diphosphate site is built by glycine 162 and asparagine 191. Mg(2+) is bound by residues asparagine 191 and isoleucine 193. Substrate is bound by residues histidine 267, arginine 364, and serine 391. Histidine 267 is a binding site for thiamine diphosphate. The Proton donor role is filled by glutamate 417. Phenylalanine 443 provides a ligand contact to thiamine diphosphate. The substrate site is built by histidine 467, aspartate 475, and arginine 526.

Belongs to the transketolase family. As to quaternary structure, homodimer. Mg(2+) serves as cofactor. The cofactor is Ca(2+). Requires Mn(2+) as cofactor. It depends on Co(2+) as a cofactor. Thiamine diphosphate is required as a cofactor.

The enzyme catalyses D-sedoheptulose 7-phosphate + D-glyceraldehyde 3-phosphate = aldehydo-D-ribose 5-phosphate + D-xylulose 5-phosphate. It functions in the pathway carbohydrate biosynthesis; Calvin cycle. Catalyzes the transfer of a two-carbon ketol group from a ketose donor to an aldose acceptor, via a covalent intermediate with the cofactor thiamine pyrophosphate. This is Transketolase, plasmid (cbbTP) from Cupriavidus necator (strain ATCC 17699 / DSM 428 / KCTC 22496 / NCIMB 10442 / H16 / Stanier 337) (Ralstonia eutropha).